A 348-amino-acid polypeptide reads, in one-letter code: Sensor protein VraS (348 aa).

2 consecutive transmembrane segments (helical) span residues 13–33 (ILVYSMLIAFLFIDKVFVNII) and 43–63 (IFGIPVFLFLNLLIVLLCIIV). The 192-residue stretch at 150 to 341 (RLARELHDSV…RIEVKAPLNK (192 aa)) folds into the Histidine kinase domain.

It is found in the cell membrane. The catalysed reaction is ATP + protein L-histidine = ADP + protein N-phospho-L-histidine.. In terms of biological role, member of the two-component regulatory system VraS/VraR involved in the control of the cell wall peptidoglycan biosynthesis. Probably activates VraR by phosphorylation. The protein is Sensor protein VraS (vraS) of Staphylococcus epidermidis (strain ATCC 35984 / DSM 28319 / BCRC 17069 / CCUG 31568 / BM 3577 / RP62A).